Here is a 169-residue protein sequence, read N- to C-terminus: Transcription antitermination protein NusB (169 aa).

The protein belongs to the NusB family.

Its function is as follows. Involved in transcription antitermination. Required for transcription of ribosomal RNA (rRNA) genes. Binds specifically to the boxA antiterminator sequence of the ribosomal RNA (rrn) operons. The polypeptide is Transcription antitermination protein NusB (Deinococcus geothermalis (strain DSM 11300 / CIP 105573 / AG-3a)).